The following is a 173-amino-acid chain: SKP1-like protein 1 (173 aa).

The interval 115–173 is interaction with the F-box domain of F-box proteins; sequence ILAANYLNIKGLLDLTCQTVADMIKGKTPEEIRKTFNIKNDFTPEEEEEIRRENQWAFE.

It belongs to the SKP1 family. In terms of assembly, part of a SCF (SKP1-CUL1-F-box protein) E3 ubiquitin-protein ligase complex. Interacts directly with MOF (via F-box domain). Interacts with rice black streaked dwarf virus RBSDV protein P7-2. Is able to form the SCF complex together with CUL1 and the viral P7-2 protein. Interacts with D3.

It localises to the nucleus. It functions in the pathway protein modification; protein ubiquitination. Functionally, involved in ubiquitination and subsequent proteasomal degradation of target proteins. Together with CUL1, a RING-box and a F-box protein, it forms a SCF E3 ubiquitin ligase complex. The functional specificity of this complex depends on the type of F-box protein. In the SCF complex, it serves as an adapter that links the F-box protein to CUL1. The polypeptide is SKP1-like protein 1 (Oryza sativa subsp. japonica (Rice)).